Consider the following 249-residue polypeptide: Elongation factor Ts (249 aa).

The involved in Mg(2+) ion dislocation from EF-Tu stretch occupies residues 82–85; it reads TDFV. Residues 215-249 form a disordered region; it reads QAGQLAPEAESTTETADATSETTTEKSSAKKKKKK. The span at 222–236 shows a compositional bias: low complexity; that stretch reads EAESTTETADATSET.

Belongs to the EF-Ts family.

It localises to the cytoplasm. Functionally, associates with the EF-Tu.GDP complex and induces the exchange of GDP to GTP. It remains bound to the aminoacyl-tRNA.EF-Tu.GTP complex up to the GTP hydrolysis stage on the ribosome. The chain is Elongation factor Ts from Rippkaea orientalis (strain PCC 8801 / RF-1) (Cyanothece sp. (strain PCC 8801)).